The sequence spans 332 residues: tRNA uridine(34) hydroxylase (332 aa).

The region spanning 127-221 (SDPETVLIDT…YLEEVPKEKS (95 aa)) is the Rhodanese domain. Catalysis depends on C181, which acts as the Cysteine persulfide intermediate. Positions 308 to 332 (AKKLAQLNKQKKQQAKEAARKKAQQ) are disordered. A compositionally biased stretch (basic and acidic residues) spans 321–332 (QAKEAARKKAQQ).

The protein belongs to the TrhO family.

It catalyses the reaction uridine(34) in tRNA + AH2 + O2 = 5-hydroxyuridine(34) in tRNA + A + H2O. Functionally, catalyzes oxygen-dependent 5-hydroxyuridine (ho5U) modification at position 34 in tRNAs. This is tRNA uridine(34) hydroxylase from Francisella tularensis subsp. tularensis (strain FSC 198).